The following is a 119-amino-acid chain: Large ribosomal subunit protein bL20 (119 aa).

The protein belongs to the bacterial ribosomal protein bL20 family.

Functionally, binds directly to 23S ribosomal RNA and is necessary for the in vitro assembly process of the 50S ribosomal subunit. It is not involved in the protein synthesizing functions of that subunit. This is Large ribosomal subunit protein bL20 from Saccharophagus degradans (strain 2-40 / ATCC 43961 / DSM 17024).